Consider the following 591-residue polypeptide: Cytidine monophosphate-N-acetylneuraminic acid hydroxylase (591 aa).

The Rieske domain occupies 16 to 114 (LASAEVESLK…IENDDENGVS (99 aa)). [2Fe-2S] cluster contacts are provided by Cys56, His58, Cys77, and His80.

It belongs to the CMP-Neu5Ac hydroxylase family. The cofactor is [2Fe-2S] cluster.

It localises to the cytoplasm. The enzyme catalyses CMP-N-acetyl-beta-neuraminate + 2 Fe(II)-[cytochrome b5] + O2 + 2 H(+) = CMP-N-glycoloyl-beta-neuraminate + 2 Fe(III)-[cytochrome b5] + H2O. Its pathway is amino-sugar metabolism; N-acetylneuraminate metabolism. Sialic acids are components of carbohydrate chains of glycoconjugates and are involved in cell-cell recognition and cell-pathogen interactions. Catalyzes the conversion of CMP-N-acetylneuraminic acid (CMP-Neu5Ac) into its hydroxylated derivative CMP-N-glycolylneuraminic acid (CMP-Neu5Gc), a sialic acid abundantly expressed at the surface of many cells. This is Cytidine monophosphate-N-acetylneuraminic acid hydroxylase (cmah) from Xenopus laevis (African clawed frog).